We begin with the raw amino-acid sequence, 450 residues long: Regulator of sigma E protease (450 aa).

Residue His22 participates in Zn(2+) binding. Glu23 is an active-site residue. His26 lines the Zn(2+) pocket. The helical transmembrane segment at 98 to 120 threads the bilayer; the sequence is AAIIAAGPVANFIFAIFAYWLVF. PDZ domains follow at residues 115 to 186 and 199 to 291; these read AYWL…APFG and HWAF…TPDT. 2 helical membrane-spanning segments follow: residues 376–398 and 426–445; these read VIYY…LFPL and FSYR…ALFN.

The protein belongs to the peptidase M50B family. In terms of assembly, interacts with RseA. Zn(2+) serves as cofactor.

The protein resides in the cell inner membrane. A site-2 regulated intramembrane protease (S2P) that cleaves the peptide bond between 'Ala-108' and 'Cys-109' in the transmembrane region of RseA. Part of a regulated intramembrane proteolysis (RIP) cascade. Acts on DegS-cleaved RseA to release the cytoplasmic domain of RseA. This provides the cell with sigma-E (RpoE) activity through the proteolysis of RseA. In Salmonella typhi, this protein is Regulator of sigma E protease (rseP).